The following is a 358-amino-acid chain: Mitogen-activated protein kinase 1 (358 aa).

Ala-2 carries the N-acetylalanine modification. Positions 23-311 (YTNLSYIGEG…VEQALAHPYL (289 aa)) constitute a Protein kinase domain. Ser-27 is modified (phosphoserine; by SGK1). ATP-binding positions include 29–37 (IGEGAYGMV) and Lys-52. Catalysis depends on Asp-147, which acts as the Proton acceptor. Thr-183 is modified (phosphothreonine; by MAP2K1 and MAP2K2). Positions 183 to 185 (TEY) match the TXY motif. Tyr-185 carries the post-translational modification Phosphotyrosine; by MAP2K1 and MAP2K2. Thr-188 is subject to Phosphothreonine; by autocatalysis. Phosphoserine occurs at positions 244, 246, and 282.

The protein belongs to the protein kinase superfamily. CMGC Ser/Thr protein kinase family. MAP kinase subfamily. In terms of assembly, binds both upstream activators and downstream substrates in multimolecular complexes. This interaction inhibits its tyrosine-kinase activity. Interacts with ADAM15, ARHGEF2, ARRB2, DAPK1 (via death domain), HSF4, IER3, IPO7, NISCH, SGK1, and isoform 1 of NEK2. Interacts (via phosphorylated form) with TPR (via C-terminal region and phosphorylated form); the interaction requires dimerization of MAPK1/ERK2 and increases following EGF stimulation. Interacts with MAP2K1. Interacts with DUSP6. Interacts (phosphorylated form) with CAV2 ('Tyr-19'-phosphorylated form); the interaction, promoted by insulin, leads to nuclear location and MAPK1 activation. Interacts with DCC. Interacts with MORG1. Interacts with PEA15. Interacts with MKNK2. MKNK2 isoform 1 binding prevents from dephosphorylation and inactivation. The phosphorylated form interacts with PML. Interacts with STYX. Interacts with CDK2AP2. Interacts with CAVIN4. Interacts with DUSP7; the interaction enhances DUSP7 phosphatase activity. Interacts with GIT1; this interaction is necessary for MAPK1 localization to focal adhesions. Interacts with ZNF263. Interacts with phosphoglycerate kinase PGK1; the interaction is direct, occurs under hypoxic conditions, and promotes interaction between PGK1 and PIN1. The cofactor is Mg(2+). Dually phosphorylated on Thr-183 and Tyr-185, which activates the enzyme. Ligand-activated ALK induces tyrosine phosphorylation. Dephosphorylated by PTPRJ at Tyr-185. Phosphorylated upon FLT3 and KIT signaling. Dephosphorylated by DUSP1 and DUSP2 at Thr-183 and Tyr-185. In terms of processing, ISGylated. Post-translationally, ubiquitinated by TRIM15 via 'Lys-63'-linked ubiquitination; leading to activation. Deubiquitinated by CYLD. Widely expressed.

The protein localises to the cytoplasm. It localises to the cytoskeleton. The protein resides in the spindle. It is found in the nucleus. Its subcellular location is the microtubule organizing center. The protein localises to the centrosome. It localises to the membrane. The protein resides in the caveola. It is found in the cell junction. Its subcellular location is the focal adhesion. The enzyme catalyses L-seryl-[protein] + ATP = O-phospho-L-seryl-[protein] + ADP + H(+). The catalysed reaction is L-threonyl-[protein] + ATP = O-phospho-L-threonyl-[protein] + ADP + H(+). Its activity is regulated as follows. Phosphorylated by MAP2K1/MEK1 and MAP2K2/MEK2 on Thr-183 and Tyr-185 in response to external stimuli like insulin or NGF. Both phosphorylations are required for activity. This phosphorylation causes dramatic conformational changes, which enable full activation and interaction of MAPK1/ERK2 with its substrates. Phosphorylation on Ser-27 by SGK1 results in its activation by enhancing its interaction with MAP2K1/MEK1 and MAP2K2/MEK2. Dephosphorylated and inactivated by DUSP1, DUSP3, DUSP6 and DUSP9. Inactivated by pyrimidylpyrrole inhibitors. Serine/threonine kinase which acts as an essential component of the MAP kinase signal transduction pathway. MAPK1/ERK2 and MAPK3/ERK1 are the 2 MAPKs which play an important role in the MAPK/ERK cascade. They participate also in a signaling cascade initiated by activated KIT and KITLG/SCF. Depending on the cellular context, the MAPK/ERK cascade mediates diverse biological functions such as cell growth, adhesion, survival and differentiation through the regulation of transcription, translation, cytoskeletal rearrangements. The MAPK/ERK cascade also plays a role in initiation and regulation of meiosis, mitosis, and postmitotic functions in differentiated cells by phosphorylating a number of transcription factors. About 160 substrates have already been discovered for ERKs. Many of these substrates are localized in the nucleus, and seem to participate in the regulation of transcription upon stimulation. However, other substrates are found in the cytosol as well as in other cellular organelles, and those are responsible for processes such as translation, mitosis and apoptosis. Moreover, the MAPK/ERK cascade is also involved in the regulation of the endosomal dynamics, including lysosome processing and endosome cycling through the perinuclear recycling compartment (PNRC); as well as in the fragmentation of the Golgi apparatus during mitosis. The substrates include transcription factors (such as ATF2, BCL6, ELK1, ERF, FOS, HSF4 or SPZ1), cytoskeletal elements (such as CANX, CTTN, GJA1, MAP2, MAPT, PXN, SORBS3 or STMN1), regulators of apoptosis (such as BAD, BTG2, CASP9, DAPK1, IER3, MCL1 or PPARG), regulators of translation (such as EIF4EBP1 and FXR1) and a variety of other signaling-related molecules (like ARHGEF2, DCC, FRS2 or GRB10). Protein kinases (such as RAF1, RPS6KA1/RSK1, RPS6KA3/RSK2, RPS6KA2/RSK3, RPS6KA6/RSK4, SYK, MKNK1/MNK1, MKNK2/MNK2, RPS6KA5/MSK1, RPS6KA4/MSK2, MAPKAPK3 or MAPKAPK5) and phosphatases (such as DUSP1, DUSP4, DUSP6 or DUSP16) are other substrates which enable the propagation the MAPK/ERK signal to additional cytosolic and nuclear targets, thereby extending the specificity of the cascade. Mediates phosphorylation of TPR in response to EGF stimulation. May play a role in the spindle assembly checkpoint. Phosphorylates PML and promotes its interaction with PIN1, leading to PML degradation. Phosphorylates CDK2AP2. Phosphorylates phosphoglycerate kinase PGK1 under hypoxic conditions to promote its targeting to the mitochondrion and suppress the formation of acetyl-coenzyme A from pyruvate. Functionally, acts as a transcriptional repressor. Binds to a [GC]AAA[GC] consensus sequence. Repress the expression of interferon gamma-induced genes. Seems to bind to the promoter of CCL5, DMP1, IFIH1, IFITM1, IRF7, IRF9, LAMP3, OAS1, OAS2, OAS3 and STAT1. Transcriptional activity is independent of kinase activity. The protein is Mitogen-activated protein kinase 1 of Mus musculus (Mouse).